The chain runs to 551 residues: Formate--tetrahydrofolate ligase (551 aa).

ATP is bound at residue 54-61; that stretch reads TPPGEGKT.

The protein belongs to the formate--tetrahydrofolate ligase family.

The enzyme catalyses (6S)-5,6,7,8-tetrahydrofolate + formate + ATP = (6R)-10-formyltetrahydrofolate + ADP + phosphate. Its pathway is one-carbon metabolism; tetrahydrofolate interconversion. This Myxococcus xanthus (strain DK1622) protein is Formate--tetrahydrofolate ligase.